We begin with the raw amino-acid sequence, 284 residues long: Elongation factor Ts (284 aa).

The involved in Mg(2+) ion dislocation from EF-Tu stretch occupies residues 80-83 (TDFV).

It belongs to the EF-Ts family.

It is found in the cytoplasm. Functionally, associates with the EF-Tu.GDP complex and induces the exchange of GDP to GTP. It remains bound to the aminoacyl-tRNA.EF-Tu.GTP complex up to the GTP hydrolysis stage on the ribosome. The protein is Elongation factor Ts of Photobacterium profundum (strain SS9).